Consider the following 330-residue polypeptide: GRB2-related adapter protein 2 (330 aa).

One can recognise an SH3 1 domain in the interval 1-56 (MEAVAKFDFTASGEDELSFHTGDVLKILSNQEEWFKAELGSQEGYVPKNFIDIQFP). A Phosphotyrosine modification is found at Y45. The region spanning 58–149 (WFHEGLSRHQ…QKQIFLRDRT (92 aa)) is the SH2 domain. K106 bears the N6-acetyllysine mark. The interval 143–244 (IFLRDRTRED…GSLDINDGHC (102 aa)) is disordered. The segment covering 144-164 (FLRDRTREDQGHRGNSLDRRS) has biased composition (basic and acidic residues). S187 is modified (phosphoserine). Residues 209 to 222 (PAPQQLQQPPQQRY) are compositionally biased toward low complexity. A Phosphoserine modification is found at S236. T262 bears the Phosphothreonine mark. Residues 271-330 (GRVRWARALYDFEALEDDELGFHSGEVVEVLDSSNPSWWTGRLHNKLGLFPANYVAPMTR) enclose the SH3 2 domain.

The protein belongs to the GRB2/sem-5/DRK family. As to quaternary structure, interacts with phosphorylated LIME1 upon TCR activation. Interacts with phosphorylated LAT and LAX1 upon TCR activation. Interacts with SHB. Interacts with PTPN23.

Its subcellular location is the nucleus. It is found in the cytoplasm. The protein resides in the endosome. In terms of biological role, interacts with SLP-76 to regulate NF-AT activation. Binds to tyrosine-phosphorylated shc. In Homo sapiens (Human), this protein is GRB2-related adapter protein 2 (GRAP2).